The chain runs to 116 residues: uncharacterized protein (116 aa).

Residues 20–42 (YLNKYYSVITYFLAFLTKFAILL) traverse the membrane as a helical segment. A disordered region spans residues 95-116 (IEFQSKSSPVPPASESNKGINE).

It is found in the membrane. This is an uncharacterized protein from Saccharomyces cerevisiae (strain ATCC 204508 / S288c) (Baker's yeast).